Reading from the N-terminus, the 270-residue chain is Acyl-[acyl-carrier-protein]--UDP-N-acetylglucosamine O-acyltransferase (270 aa).

Belongs to the transferase hexapeptide repeat family. LpxA subfamily. As to quaternary structure, homotrimer.

Its subcellular location is the cytoplasm. It catalyses the reaction a (3R)-hydroxyacyl-[ACP] + UDP-N-acetyl-alpha-D-glucosamine = a UDP-3-O-[(3R)-3-hydroxyacyl]-N-acetyl-alpha-D-glucosamine + holo-[ACP]. The protein operates within glycolipid biosynthesis; lipid IV(A) biosynthesis; lipid IV(A) from (3R)-3-hydroxytetradecanoyl-[acyl-carrier-protein] and UDP-N-acetyl-alpha-D-glucosamine: step 1/6. In terms of biological role, involved in the biosynthesis of lipid A, a phosphorylated glycolipid that anchors the lipopolysaccharide to the outer membrane of the cell. This chain is Acyl-[acyl-carrier-protein]--UDP-N-acetylglucosamine O-acyltransferase, found in Sinorhizobium fredii (strain NBRC 101917 / NGR234).